The sequence spans 453 residues: Alpha-glucosidase (453 aa).

NAD(+) is bound at residue 3–69 (TKIVLVGAGS…LPFIVSATTD (67 aa)). Asn-149 is a substrate binding site. A Mn(2+)-binding site is contributed by Cys-171. His-172 acts as the Proton donor in catalysis. His-201 is a binding site for Mn(2+).

As to quaternary structure, homotetramer. Mn(2+) serves as cofactor. The cofactor is Co(2+). Requires Ca(2+) as cofactor. It depends on Fe(2+) as a cofactor. Mg(2+) is required as a cofactor. Sr(2+) serves as cofactor. The cofactor is Ni(2+). Requires NAD(+) as cofactor.

It catalyses the reaction Hydrolysis of terminal, non-reducing (1-&gt;4)-linked alpha-D-glucose residues with release of alpha-D-glucose.. Its pathway is glycan degradation; palatinose degradation. Its activity is regulated as follows. Is inhibited by EDTA in vitro. Alpha-glucosidase with broad specificity. Hydrolyzes maltose, palatinose, maltulose, trehalose, trehalulose, turanose, leucrose, sucrose and maltitol. Is not active against alpha-galactosides, e.g. melibiose, and alpha-mannosides. Shows an obligate requirement for an O-alpha-glycosidic linkage, since it is not able to cleave beta-glycosidic bonds (cellobiose, gentiobiose, lactose, sophorose or laminaribiose). Cannot hydrolyze phosphorylated alpha-glucosides derivatives. Seems to be involved in the degradation of palatinose, a sucrose isomer that is formed as a reserve material under conditions of excess carbon availability, sequestered in a form unavailable to competitors such as fungi or the host plant, and whose consumption appears to be postponed until the preferentially metabolized carbon source (e.g. sucrose) is depleted. This Erwinia rhapontici (Pectobacterium rhapontici) protein is Alpha-glucosidase (palH).